Here is a 322-residue protein sequence, read N- to C-terminus: Dirigent protein 9 (322 aa).

A signal peptide spans 1–20; it reads MAKALHITIFLFLISSNLLA.

The protein belongs to the plant dirigent protein family. Homodimer.

It is found in the secreted. The protein resides in the extracellular space. Its subcellular location is the apoplast. Its function is as follows. Dirigent proteins impart stereoselectivity on the phenoxy radical-coupling reaction, yielding optically active lignans from two molecules of coniferyl alcohol in the biosynthesis of lignans, flavonolignans, and alkaloids and thus plays a central role in plant secondary metabolism. This chain is Dirigent protein 9 (DIR9), found in Arabidopsis thaliana (Mouse-ear cress).